Consider the following 582-residue polypeptide: Arginine--tRNA ligase (582 aa).

Positions 127 to 137 (PNLAKEMHVGH) match the 'HIGH' region motif.

The protein belongs to the class-I aminoacyl-tRNA synthetase family. In terms of assembly, monomer.

The protein localises to the cytoplasm. The catalysed reaction is tRNA(Arg) + L-arginine + ATP = L-arginyl-tRNA(Arg) + AMP + diphosphate. This chain is Arginine--tRNA ligase, found in Psychromonas ingrahamii (strain DSM 17664 / CCUG 51855 / 37).